The following is a 21-amino-acid chain: Sarafotoxin-D (21 aa).

2 disulfide bridges follow: cysteine 1/cysteine 15 and cysteine 3/cysteine 11.

It belongs to the endothelin/sarafotoxin family. In terms of tissue distribution, expressed by the venom gland.

The protein resides in the secreted. In terms of biological role, vasoconstrictor activity. These toxins cause cardiac arrest probably as a result of coronary vasospasm. May act by displaying agonistic activities towards endothelin-1 and -2 receptors (EDNRA and EDNRB). The sequence is that of Sarafotoxin-D from Atractaspis engaddensis (Israeli burrowing asp).